The following is a 154-amino-acid chain: Thioredoxin-like protein CXXS2 (154 aa).

The Thioredoxin domain maps to Arg23–Asn148. Ser31 carries the phosphoserine modification.

This sequence belongs to the thioredoxin family. As to expression, ubiquitous.

Its subcellular location is the cytoplasm. Functionally, possesses low disulfide reductase activity, but efficient protein disulfide isomerase activity. Does not possess deglutathionylation activity. The polypeptide is Thioredoxin-like protein CXXS2 (CXXS2) (Arabidopsis thaliana (Mouse-ear cress)).